Reading from the N-terminus, the 208-residue chain is Probable nicotinate-nucleotide adenylyltransferase (208 aa).

This sequence belongs to the NadD family.

The enzyme catalyses nicotinate beta-D-ribonucleotide + ATP + H(+) = deamido-NAD(+) + diphosphate. The protein operates within cofactor biosynthesis; NAD(+) biosynthesis; deamido-NAD(+) from nicotinate D-ribonucleotide: step 1/1. Its function is as follows. Catalyzes the reversible adenylation of nicotinate mononucleotide (NaMN) to nicotinic acid adenine dinucleotide (NaAD). This Nostoc sp. (strain PCC 7120 / SAG 25.82 / UTEX 2576) protein is Probable nicotinate-nucleotide adenylyltransferase.